The chain runs to 283 residues: Lectin subunit alpha (283 aa).

A signal peptide spans 1–23 (MSLTMKNVEGFVIFLVIFTSTAA). The C-type lectin domain occupies 51–159 (HECARHDQQL…NVKMGYICEP (109 aa)). 2 cysteine pairs are disulfide-bonded: Cys53-Cys157 and Cys132-Cys149.

Functionally, role in the defense system of the organism against microorganisms. This lectin binds galactose. The polypeptide is Lectin subunit alpha (Sarcophaga peregrina (Flesh fly)).